The chain runs to 61 residues: Metallothionein-1B (61 aa).

The interval 1–29 (MDPNCSCTTGGSCACAGSCKCKECKCTSC) is beta. A divalent metal cation-binding residues include C5, C7, C13, C15, C19, C21, C24, C26, C29, C33, C34, C36, C37, C41, C44, C48, C50, C57, C59, and C60. The interval 30 to 61 (KKCCCSCCPVGCAKCAQGCVCKGSSEKCRCCA) is alpha.

The protein belongs to the metallothionein superfamily. Type 1 family. Monomer.

Functionally, metallothioneins have a high content of cysteine residues that bind various heavy metals; these proteins are transcriptionally regulated by both heavy metals and glucocorticoids. This is Metallothionein-1B (MT1B) from Homo sapiens (Human).